The sequence spans 354 residues: Elongation factor Ts, mitochondrial (354 aa).

A mitochondrion-targeting transit peptide spans 1–47; that stretch reads MMRSTLSLLQKCRLPNNNGSLLSFKNNQVVNQTALFSMKSNQQYRFY.

It belongs to the EF-Ts family.

It is found in the mitochondrion. Its function is as follows. Associates with the EF-Tu.GDP complex and induces the exchange of GDP to GTP. It remains bound to the aminoacyl-tRNA.EF-Tu.GTP complex up to the GTP hydrolysis stage on the ribosome. This Heterostelium pallidum (strain ATCC 26659 / Pp 5 / PN500) (Cellular slime mold) protein is Elongation factor Ts, mitochondrial (tsfm).